A 713-amino-acid chain; its full sequence is MEEKNGDAKTFWMELQDDGKVDLMFEKTQNVLHSLKQKIKDGSATNGDYVQAMNLVNEATLSNTQTLEKGMFITYSNPEVNTHRSNHTPVTQSEQENKSSAVPSASCDNSCPKGCTIPSPGKKVFLPVKNKADNLVKKEAPLHISFHRHICSRTCLMETPLSLKGENPLQLPIRCHFQRRHAKTNSHSSALHVNYKTPCGRNLRNMEEVFHYLLETECNFLFTDNFSFNTYVQLTRNHPKQNEVVSDVDISNGVESVSIPFCNEIDNSKLPRFKYRNTVWPRIYHLNFSNMFSDSCDCSEGCIDIKKCACLQLTAKNAKACPLSSDGECAGYKYKRLQRLIPTGIYECNLLCKCNKQMCQNRVIQHGVRVRLQVFKSEKKGWGVRCLDDIDKGTFVCIYSGRLLRRATPEKTNIGENGREQQHIVKNSFSKKRKLEVVCSDCDAHCDSPKAEDCPPKLSGDLKEPAVEMNHRNISRTQHHSVIRRTKSKTTVFHYSEKNMGFVCSDSAAPEDKNGFKPAQEHVNSEARRAHEDLSSNPAGDSEDTQLTESDVIDITASREDSAPAYRCKHATIVDRKDTKQVLEVPGKKSQEEEPAASQSQQALCDEELPSERTKIPSASLMQLSKESLFLLDASKEGNVGRFLNHSCCPNLWVQNVFVETHDRNFPLVAFFTNRYVKARTELTWDYGYEAGATPAKEILCQCGFNKCRKKLI.

Positions 78-109 (PEVNTHRSNHTPVTQSEQENKSSAVPSASCDN) are disordered. Residues 87 to 109 (HTPVTQSEQENKSSAVPSASCDN) are compositionally biased toward polar residues. An MBD domain is found at 161–233 (LSLKGENPLQ…DNFSFNTYVQ (73 aa)). The 74-residue stretch at 294 to 367 (DSCDCSEGCI…MCQNRVIQHG (74 aa)) folds into the Pre-SET domain. Zn(2+)-binding residues include cysteine 296, cysteine 298, cysteine 302, cysteine 308, cysteine 310, cysteine 348, cysteine 352, cysteine 354, and cysteine 359. In terms of domain architecture, SET spans 370 to 688 (VRLQVFKSEK…ARTELTWDYG (319 aa)). An S-adenosyl-L-methionine-binding site is contributed by 380–382 (KGW). 2 stretches are compositionally biased toward basic and acidic residues: residues 511–534 (EDKN…HEDL) and 579–592 (TKQV…KSQE). Disordered regions lie at residues 511–549 (EDKN…QLTE) and 579–608 (TKQV…CDEE). S-adenosyl-L-methionine-binding positions include arginine 642 and 645-646 (NH). Positions 648, 701, 703, and 708 each coordinate Zn(2+).

Belongs to the class V-like SAM-binding methyltransferase superfamily.

Its subcellular location is the nucleus. The protein localises to the chromosome. It catalyses the reaction N(6),N(6)-dimethyl-L-lysyl(9)-[histone H3] + S-adenosyl-L-methionine = N(6),N(6),N(6)-trimethyl-L-lysyl(9)-[histone H3] + S-adenosyl-L-homocysteine + H(+). Its function is as follows. Histone methyltransferase involved in left-right axis specification in early development and mitosis. Specifically trimethylates 'Lys-9' of histone H3 (H3K9me3). H3K9me3 is a specific tag for epigenetic transcriptional repression that recruits HP1 (CBX1, CBX3 and/or CBX5) proteins to methylated histones. Contributes to H3K9me3 in both the interspersed repetitive elements and centromere-associated repeats. Plays a role in chromosome condensation and segregation during mitosis. The chain is Histone-lysine N-methyltransferase SETDB2 (Setdb2) from Mus musculus (Mouse).